The sequence spans 214 residues: Adenylate kinase (214 aa).

10 to 15 (GAGKGT) provides a ligand contact to ATP. Positions 30–59 (STGDMLRGAIKAGTDLGKQAKTLMDAGQLV) are NMP. AMP-binding positions include T31, R36, 57 to 59 (QLV), 85 to 88 (GFPR), and Q92. The tract at residues 122 to 159 (GRRVHQASGRTYHVVYNPPKVEGKDDVTGEDLIIRADD) is LID. ATP contacts are provided by residues R123 and 132-133 (TY). Residues R156 and R167 each coordinate AMP. K200 provides a ligand contact to ATP.

It belongs to the adenylate kinase family. In terms of assembly, monomer.

Its subcellular location is the cytoplasm. It catalyses the reaction AMP + ATP = 2 ADP. It functions in the pathway purine metabolism; AMP biosynthesis via salvage pathway; AMP from ADP: step 1/1. Its function is as follows. Catalyzes the reversible transfer of the terminal phosphate group between ATP and AMP. Plays an important role in cellular energy homeostasis and in adenine nucleotide metabolism. The chain is Adenylate kinase from Pasteurella multocida (strain Pm70).